We begin with the raw amino-acid sequence, 717 residues long: Fatty acid oxidation complex subunit alpha (717 aa).

Residues 1 to 190 (MIHAGNAITV…KDGAVDAVVA (190 aa)) are enoyl-CoA hydratase/isomerase. D298 provides a ligand contact to substrate. The interval 313 to 717 (HPVNQAAVLG…MAANNKKFYG (405 aa)) is 3-hydroxyacyl-CoA dehydrogenase. Residues M326, D345, 402 to 404 (VTE), K409, and S431 contribute to the NAD(+) site. H452 functions as the For 3-hydroxyacyl-CoA dehydrogenase activity in the catalytic mechanism. N455 is an NAD(+) binding site. Residue N502 coordinates substrate.

This sequence in the N-terminal section; belongs to the enoyl-CoA hydratase/isomerase family. In the C-terminal section; belongs to the 3-hydroxyacyl-CoA dehydrogenase family. As to quaternary structure, heterotetramer of two alpha chains (FadB) and two beta chains (FadA).

The enzyme catalyses a (3S)-3-hydroxyacyl-CoA + NAD(+) = a 3-oxoacyl-CoA + NADH + H(+). It carries out the reaction a (3S)-3-hydroxyacyl-CoA = a (2E)-enoyl-CoA + H2O. The catalysed reaction is a 4-saturated-(3S)-3-hydroxyacyl-CoA = a (3E)-enoyl-CoA + H2O. It catalyses the reaction (3S)-3-hydroxybutanoyl-CoA = (3R)-3-hydroxybutanoyl-CoA. The enzyme catalyses a (3Z)-enoyl-CoA = a 4-saturated (2E)-enoyl-CoA. It carries out the reaction a (3E)-enoyl-CoA = a 4-saturated (2E)-enoyl-CoA. The protein operates within lipid metabolism; fatty acid beta-oxidation. In terms of biological role, involved in the aerobic and anaerobic degradation of long-chain fatty acids via beta-oxidation cycle. Catalyzes the formation of 3-oxoacyl-CoA from enoyl-CoA via L-3-hydroxyacyl-CoA. It can also use D-3-hydroxyacyl-CoA and cis-3-enoyl-CoA as substrate. This is Fatty acid oxidation complex subunit alpha from Acinetobacter baumannii (strain AB307-0294).